The following is a 724-amino-acid chain: DNA ligase (724 aa).

NAD(+)-binding positions include 44-48 (DADYD), 93-94 (SL), and Glu127. Catalysis depends on Lys129, which acts as the N6-AMP-lysine intermediate. NAD(+) contacts are provided by Arg150, Glu186, Lys307, and Lys331. Zn(2+) is bound by residues Cys437, Cys440, Cys461, and Cys467. Positions 646–724 (TEGSPVAGKT…EDEWLALIGG (79 aa)) constitute a BRCT domain.

This sequence belongs to the NAD-dependent DNA ligase family. LigA subfamily. Requires Mg(2+) as cofactor. The cofactor is Mn(2+).

It carries out the reaction NAD(+) + (deoxyribonucleotide)n-3'-hydroxyl + 5'-phospho-(deoxyribonucleotide)m = (deoxyribonucleotide)n+m + AMP + beta-nicotinamide D-nucleotide.. Its function is as follows. DNA ligase that catalyzes the formation of phosphodiester linkages between 5'-phosphoryl and 3'-hydroxyl groups in double-stranded DNA using NAD as a coenzyme and as the energy source for the reaction. It is essential for DNA replication and repair of damaged DNA. This Agrobacterium fabrum (strain C58 / ATCC 33970) (Agrobacterium tumefaciens (strain C58)) protein is DNA ligase.